The sequence spans 722 residues: Formin-like protein 16 (722 aa).

4 disordered regions span residues 1–56 (MSPV…PMFD), 564–606 (ATED…PSRP), 635–672 (VGSPSPPPPSMSGGAPPPPPPPPMLVASRTAPPPHLSH), and 690–722 (PLLVREGAPPPTLPSMSGGAPPPPPPLPMLRYQ). The span at 22-55 (PLPPPPPPPMRRSAPSPPPMSGRVPPPPPPPPMF) shows a compositional bias: pro residues. Positions 182–571 (FRCPVTKRSS…KAATEDVFGG (390 aa)) constitute an FH2 domain. 3 stretches are compositionally biased toward pro residues: residues 593–605 (IRPPPSIPRPPSR), 638–658 (PSPPPPSMSGGAPPPPPPPPM), and 709–722 (APPPPPPLPMLRYQ).

This sequence belongs to the formin-like family. Class-II subfamily.

The polypeptide is Formin-like protein 16 (FH16) (Arabidopsis thaliana (Mouse-ear cress)).